Here is a 154-residue protein sequence, read N- to C-terminus: SsrA-binding protein (154 aa).

The protein belongs to the SmpB family.

The protein resides in the cytoplasm. Functionally, required for rescue of stalled ribosomes mediated by trans-translation. Binds to transfer-messenger RNA (tmRNA), required for stable association of tmRNA with ribosomes. tmRNA and SmpB together mimic tRNA shape, replacing the anticodon stem-loop with SmpB. tmRNA is encoded by the ssrA gene; the 2 termini fold to resemble tRNA(Ala) and it encodes a 'tag peptide', a short internal open reading frame. During trans-translation Ala-aminoacylated tmRNA acts like a tRNA, entering the A-site of stalled ribosomes, displacing the stalled mRNA. The ribosome then switches to translate the ORF on the tmRNA; the nascent peptide is terminated with the 'tag peptide' encoded by the tmRNA and targeted for degradation. The ribosome is freed to recommence translation, which seems to be the essential function of trans-translation. This is SsrA-binding protein from Streptococcus thermophilus (strain CNRZ 1066).